The following is a 106-amino-acid chain: Small ribosomal subunit protein uS10 (106 aa).

The protein belongs to the universal ribosomal protein uS10 family. As to quaternary structure, part of the 30S ribosomal subunit.

In terms of biological role, involved in the binding of tRNA to the ribosomes. The polypeptide is Small ribosomal subunit protein uS10 (Prochlorococcus marinus (strain MIT 9301)).